The chain runs to 224 residues: Iron-sulfur cluster repair protein ScdA (224 aa).

It belongs to the RIC family. ScdA subfamily. In terms of assembly, homodimer.

The protein resides in the cytoplasm. Its function is as follows. Di-iron-containing protein involved in the repair of iron-sulfur clusters damaged by oxidative and nitrosative stress conditions. In Staphylococcus epidermidis (strain ATCC 35984 / DSM 28319 / BCRC 17069 / CCUG 31568 / BM 3577 / RP62A), this protein is Iron-sulfur cluster repair protein ScdA.